The chain runs to 601 residues: Beta-phellandrene synthase (601 aa).

A chloroplast-targeting transit peptide spans 1–35 (MSTISIHHVGILRNPLPSKNKRALINNPWSLSLPR). Mn(2+) is bound by residues aspartate 356 and aspartate 360. The short motif at 356–360 (DDVYD) is the DDXXD motif element. Homodimerization stretches follow at residues 362 to 368 (YGTLDEL) and 434 to 471 (EAEW…LSIP). Mn(2+) contacts are provided by aspartate 499 and glutamate 507.

This sequence belongs to the terpene synthase family. In terms of assembly, homodimer. Mn(2+) serves as cofactor. Requires Mg(2+) as cofactor. As to expression, expressed in peltate glandular trichomes. Present at low levels in flowers and stems.

The protein resides in the plastid. It is found in the chloroplast. It catalyses the reaction (2E)-geranyl diphosphate = beta-phellandrene + diphosphate. It carries out the reaction (2E)-geranyl diphosphate = (1R,5R)-sabinene + diphosphate. The protein operates within secondary metabolite biosynthesis; terpenoid biosynthesis. Its function is as follows. Involved in the biosynthesis of phenolic monoterpenes natural products. Monoterpene synthase that catalyzes mainly the formation of olefins such as sabinene and beta-phellandrene, and minor amounts of other monoterpenes (e.g. myrcene, gamma-terpinene, alpha-thujene and alpha-pinene) from geranyl diphosphate (GPP). The polypeptide is Beta-phellandrene synthase (Origanum vulgare (Wild marjoram)).